Consider the following 270-residue polypeptide: Dermonecrotic toxin LsaSicTox-alphaIB1av (270 aa).

Histidine 2 is a catalytic residue. Residues glutamate 22 and aspartate 24 each coordinate Mg(2+). Residue histidine 38 is the Nucleophile of the active site. 2 disulfides stabilise this stretch: cysteine 42-cysteine 48 and cysteine 44-cysteine 187. Residue aspartate 82 coordinates Mg(2+).

The protein belongs to the arthropod phospholipase D family. Class II subfamily. Mg(2+) is required as a cofactor. Expressed by the venom gland.

The protein localises to the secreted. It carries out the reaction an N-(acyl)-sphingosylphosphocholine = an N-(acyl)-sphingosyl-1,3-cyclic phosphate + choline. The catalysed reaction is an N-(acyl)-sphingosylphosphoethanolamine = an N-(acyl)-sphingosyl-1,3-cyclic phosphate + ethanolamine. It catalyses the reaction a 1-acyl-sn-glycero-3-phosphocholine = a 1-acyl-sn-glycero-2,3-cyclic phosphate + choline. The enzyme catalyses a 1-acyl-sn-glycero-3-phosphoethanolamine = a 1-acyl-sn-glycero-2,3-cyclic phosphate + ethanolamine. Its function is as follows. Dermonecrotic toxins cleave the phosphodiester linkage between the phosphate and headgroup of certain phospholipids (sphingolipid and lysolipid substrates), forming an alcohol (often choline) and a cyclic phosphate. This toxin acts on sphingomyelin (SM). It may also act on ceramide phosphoethanolamine (CPE), lysophosphatidylcholine (LPC) and lysophosphatidylethanolamine (LPE), but not on lysophosphatidylserine (LPS), and lysophosphatidylglycerol (LPG). It acts by transphosphatidylation, releasing exclusively cyclic phosphate products as second products. Induces dermonecrosis, hemolysis, increased vascular permeability, edema, inflammatory response, and platelet aggregation. This Loxosceles sabina (Tucson recluse spider) protein is Dermonecrotic toxin LsaSicTox-alphaIB1av.